The sequence spans 235 residues: 5'-methylthioadenosine/S-adenosylhomocysteine nucleosidase (235 aa).

The active-site Proton acceptor is the Glu-12. Residues Gly-78, Met-153, and 174 to 175 contribute to the substrate site; that span reads ME. Asp-198 serves as the catalytic Proton donor.

The protein belongs to the PNP/UDP phosphorylase family. MtnN subfamily.

It carries out the reaction S-adenosyl-L-homocysteine + H2O = S-(5-deoxy-D-ribos-5-yl)-L-homocysteine + adenine. The enzyme catalyses S-methyl-5'-thioadenosine + H2O = 5-(methylsulfanyl)-D-ribose + adenine. The catalysed reaction is 5'-deoxyadenosine + H2O = 5-deoxy-D-ribose + adenine. Its pathway is amino-acid biosynthesis; L-methionine biosynthesis via salvage pathway; S-methyl-5-thio-alpha-D-ribose 1-phosphate from S-methyl-5'-thioadenosine (hydrolase route): step 1/2. Functionally, catalyzes the irreversible cleavage of the glycosidic bond in both 5'-methylthioadenosine (MTA) and S-adenosylhomocysteine (SAH/AdoHcy) to adenine and the corresponding thioribose, 5'-methylthioribose and S-ribosylhomocysteine, respectively. Also cleaves 5'-deoxyadenosine, a toxic by-product of radical S-adenosylmethionine (SAM) enzymes, into 5-deoxyribose and adenine. In Geobacillus kaustophilus (strain HTA426), this protein is 5'-methylthioadenosine/S-adenosylhomocysteine nucleosidase.